Consider the following 238-residue polypeptide: Tetraspanin-8 (238 aa).

The Cytoplasmic segment spans residues 1–9 (MAGVNVCIK). A helical transmembrane segment spans residues 10–33 (CSMFIFNFVFWLCGAIILSVAISI). Residues 34–57 (RAGKIGQEILAPGDADLNLFIAVN) are Extracellular-facing. A helical membrane pass occupies residues 58-72 (ILIFVGAVIMILGFL). The Cytoplasmic portion of the chain corresponds to 73 to 83 (GCCGAMKENQF). A helical transmembrane segment spans residues 84 to 109 (MMILFFVGLLMILLLQVAAGIVATTR). The Extracellular portion of the chain corresponds to 110-206 (KSKTEQALNK…ASISQMFSKR (97 aa)). N118 carries N-linked (GlcNAc...) asparagine glycosylation. Residues 207-231 (LFIVLALAFGLAAIEVLGLIFSIVL) form a helical membrane-spanning segment. Topologically, residues 232–238 (YCQMRKK) are cytoplasmic.

This sequence belongs to the tetraspanin (TM4SF) family. In terms of assembly, forms homooligomers. Interacts with MEP1B. Interacts with integrin alpha3/ITGA3. Interacts with RICTOR and MTOR. Interacts with ADAM17. Interacts with ECE1.

The protein resides in the cell membrane. Its function is as follows. Structural component of specialized membrane microdomains known as tetraspanin-enriched microdomains (TERMs), which act as platforms for receptor clustering and signaling. Participates thereby in diverse biological functions such as cell signal transduction, migration and protein trafficking. Promotes ADAM17-mediated TNF-alpha processing through recruitment of ADAM17 to tetraspanin-enriched micro-domains (TEMs). Forms a complex with RICTOR and integrin alpha3/ITGA3 to mediate mTORC2 activation and AKT1 phosphorylation leading to cell migration. Reduces apoptosis and autophagy induced by high glucose levels through forming a complex with mTOR and RICTOR. Contributes to the maintenance of intestinal epithelial barrier and plays a role in the regulation of intestine inflammation by switching interferon gamma receptor 1/IFNGR1 from clathrin-dependent to lipid raft-dependent endocytosis route to limit STAT1 activation magnitude and duration. Acts as a modulator of the endothelin axis by associating with endothelin converting enzyme ECE1 and regulating its activity of conversion of the endothelin-1 precursor to endothelin. In Bos taurus (Bovine), this protein is Tetraspanin-8 (TSPAN8).